The sequence spans 180 residues: Prothoracicotropic hormone (180 aa).

An N-terminal signal peptide occupies residues 1–15; that stretch reads MKLLILCVMVHGLLA. Residues 16 to 64 constitute a propeptide that is removed on maturation; sequence EGPGQVLWKEQVVAPEFLLDDREDIASNRNAFFYEDKRSFRPEGLGEQV. 2 disulfide bridges follow: Cys-88–Cys-123 and Cys-111–Cys-175.

In terms of assembly, homodimer; disulfide-linked.

It localises to the secreted. PTTH is a brain secretory polypeptide of insects which stimulates the prothoracic glands to produce and release ecdysone, the steroid essential to insect development. The polypeptide is Prothoracicotropic hormone (Camponotus floridanus (Florida carpenter ant)).